We begin with the raw amino-acid sequence, 198 residues long: MSNVRVSNGSPTSERRDAKQAEYPKPSACRNLFGPVNHEELTRDLEKHCIDMEEASQNKWNFDFQNHKPLEGKYEWQEVEKGSLPEFYYRPPRPPKGACKVPAQESQDVSGTRQAGPLLGSQANSEDTHLVDQKTDAPDSQTGLAEQCTGIRKRPATDDSSPQNKRANRTEENVSDGSPNAGSVEQTPKKPGLRRRQT.

A compositionally biased stretch (polar residues) spans 1–12 (MSNVRVSNGSPT). Residues 1–30 (MSNVRVSNGSPTSERRDAKQAEYPKPSACR) form a disordered region. Position 10 is a phosphoserine; by UHMK1 (Ser10). A compositionally biased stretch (basic and acidic residues) spans 13-22 (SERRDAKQAE). The segment at 51–91 (DMEEASQNKWNFDFQNHKPLEGKYEWQEVEKGSLPEFYYRP) is interaction with CDK2. Tyr74 is modified (phosphotyrosine; by SRC). The segment at 87–198 (FYYRPPRPPK…KKPGLRRRQT (112 aa)) is disordered. A Phosphotyrosine; by ABL, LYN and SRC modification is found at Tyr88. The residue at position 89 (Tyr89) is a Phosphotyrosine. Positions 104–113 (QESQDVSGTR) are enriched in polar residues. The span at 126-137 (EDTHLVDQKTDA) shows a compositional bias: basic and acidic residues. Positions 153 to 169 (KRPATDDSSPQNKRANR) match the Nuclear localization signal motif. Thr157 is modified (phosphothreonine; by CaMK1, PKB/AKT1 and PIM1). Thr170 is subject to Phosphothreonine. Polar residues predominate over residues 175–186 (SDGSPNAGSVEQ). Thr187 carries the phosphothreonine; by PKB/AKT1, CDK1 and CDK2 modification. At Thr198 the chain carries Phosphothreonine; by CaMK1, PKB/AKT1, RPS6KA1, RPS6KA3 and PIM1.

The protein belongs to the CDI family. In terms of assembly, forms a ternary complex composed of CCNE1, CDK2 and CDKN1B. Interacts directly with CCNE1; the interaction is inhibited by CDK2-dependent phosphorylation on Thr-187. Interacts with COPS5, subunit of the COP9 signalosome complex; the interaction leads to CDKN1B degradation. Interacts with NUP50; the interaction leads to nuclear import and degradation of phosphorylated CDKN1B. Interacts with CCND1 and SNX6. Interacts (Thr-198-phosphorylated form) with 14-3-3 proteins, binds strongly YWHAQ, weakly YWHAE and YWHAH, but not YWHAB nor YWHAZ; the interaction with YWHAQ results in translocation to the cytoplasm. Interacts with AKT1 and LYN; the interactions lead to cytoplasmic mislocation, phosphorylation of CDKN1B and inhibition of cell cycle arrest. Forms a ternary complex with CCNA2 and CDK2; CDKN1B inhibits the kinase activity of CDK2 through conformational rearrangements. Interacts (unphosphorylated form) with CDK2. Forms a complex with CDK2 and SPDYA, but does not directly interact with SPDYA. Forms a ternary complex composed of cyclin D, CDK4 and CDKN1B. Interacts (phosphorylated on Tyr-88 and Tyr-89) with CDK4; the interaction is required for cyclin D and CDK4 complex assembly, induces nuclear translocation and activates the CDK4 kinase activity. Interacts with GRB2. Interacts with PIM1. Identified in a complex with SKP1, SKP2 and CKS1B. Interacts with UHMK1; the interaction leads to cytoplasmic mislocation, phosphorylation of CDKN1B and inhibition of cell cycle arrest. Also interacts with CDK1. Dephosphorylated on Thr-187 by PPM1H, leading to CDKN1B stability. In terms of processing, phosphorylated; phosphorylation occurs on serine, threonine and tyrosine residues. Phosphorylation on Ser-10 is the major site of phosphorylation in resting cells, takes place at the G(0)-G(1) phase and leads to protein stability. Phosphorylation on other sites is greatly enhanced by mitogens, growth factors, cMYC and in certain cancer cell lines. The phosphorylated form found in the cytoplasm is inactivate. Phosphorylation on Thr-198 is required for interaction with 14-3-3 proteins. Phosphorylation on Thr-187, by CDK1 and CDK2 leads to protein ubiquitination and proteasomal degradation. Tyrosine phosphorylation promotes this process. Phosphorylation by PKB/AKT1 can be suppressed by LY294002, an inhibitor of the catalytic subunit of PI3K. Phosphorylation on Tyr-88 and Tyr-89 has no effect on binding CDK2, but is required for binding CDK4. Dephosphorylated on tyrosine residues by G-CSF. Dephosphorylated on Thr-187 by PPM1H, leading to CDKN1B stability. Post-translationally, ubiquitinated; in the cytoplasm by the KPC complex (composed of RNF123/KPC1 and UBAC1/KPC2) and, in the nucleus, by SCF(SKP2). The latter requires prior phosphorylation on Thr-187. Ubiquitinated; by a TRIM21-containing SCF(SKP2)-like complex; leads to its degradation. Subject to degradation in the lysosome. Interaction with SNX6 promotes lysosomal degradation.

The protein resides in the nucleus. It localises to the cytoplasm. The protein localises to the endosome. Functionally, important regulator of cell cycle progression. Inhibits the kinase activity of CDK2 bound to cyclin A, but has little inhibitory activity on CDK2 bound to SPDYA. Involved in G1 arrest. Potent inhibitor of cyclin E- and cyclin A-CDK2 complexes. Forms a complex with cyclin type D-CDK4 complexes and is involved in the assembly, stability, and modulation of CCND1-CDK4 complex activation. Acts either as an inhibitor or an activator of cyclin type D-CDK4 complexes depending on its phosphorylation state and/or stoichometry. This is Cyclin-dependent kinase inhibitor 1B (CDKN1B) from Canis lupus familiaris (Dog).